The chain runs to 289 residues: Pteridine reductase 1 (289 aa).

14–41 is an NADP(+) binding site; sequence GAAKRLGSSIAEALHAEGYTVCLHYHRS. Serine 176 contributes to the substrate binding site. Tyrosine 195 (proton acceptor) is an active-site residue. 195–199 provides a ligand contact to NADP(+); that stretch reads YTMAK.

The protein belongs to the short-chain dehydrogenases/reductases (SDR) family. In terms of assembly, homotetramer.

The enzyme catalyses (6R)-L-erythro-5,6,7,8-tetrahydrobiopterin + 2 NADP(+) = L-erythro-biopterin + 2 NADPH + 2 H(+). It participates in cofactor biosynthesis; tetrahydrobiopterin biosynthesis; tetrahydrobiopterin from biopterin: step 1/1. In terms of biological role, exhibits a NADPH-dependent biopterin reductase activity. Has good activity with folate and significant activity with dihydrofolate and dihydrobiopterin, but not with quinonoid dihydrobiopterin. Confers resistance to methotrexate (MTX). This chain is Pteridine reductase 1 (PTR1), found in Leishmania tarentolae (Sauroleishmania tarentolae).